Here is an 88-residue protein sequence, read N- to C-terminus: Small ribosomal subunit protein uS17 (88 aa).

It belongs to the universal ribosomal protein uS17 family. In terms of assembly, part of the 30S ribosomal subunit.

In terms of biological role, one of the primary rRNA binding proteins, it binds specifically to the 5'-end of 16S ribosomal RNA. The protein is Small ribosomal subunit protein uS17 of Yersinia pseudotuberculosis serotype O:1b (strain IP 31758).